The following is a 163-amino-acid chain: MAEVANNEQQDPQFNIQRVYTKDISFETPNSPAVFQKEWTPEVKLDLDTRSAKLADNVFEVVLSLTVTAKNGEETAFLCEVQQAGIFAINGLTEQQLAHSLGAYCPNILFPYAREAVGSLVARGTFPQLNLAPVNFDALFAQYVNQRQAGAEEAAAKTEEASA.

It belongs to the SecB family. Homotetramer, a dimer of dimers. One homotetramer interacts with 1 SecA dimer.

Its subcellular location is the cytoplasm. Functionally, one of the proteins required for the normal export of preproteins out of the cell cytoplasm. It is a molecular chaperone that binds to a subset of precursor proteins, maintaining them in a translocation-competent state. It also specifically binds to its receptor SecA. The chain is Protein-export protein SecB from Shewanella woodyi (strain ATCC 51908 / MS32).